The following is a 51-amino-acid chain: Large ribosomal subunit protein bL33 (51 aa).

Belongs to the bacterial ribosomal protein bL33 family.

The chain is Large ribosomal subunit protein bL33 from Francisella philomiragia subsp. philomiragia (strain ATCC 25017 / CCUG 19701 / FSC 153 / O#319-036).